Consider the following 384-residue polypeptide: Lipid-A-disaccharide synthase (384 aa).

It belongs to the LpxB family.

The enzyme catalyses a lipid X + a UDP-2-N,3-O-bis[(3R)-3-hydroxyacyl]-alpha-D-glucosamine = a lipid A disaccharide + UDP + H(+). It participates in bacterial outer membrane biogenesis; LPS lipid A biosynthesis. Its function is as follows. Condensation of UDP-2,3-diacylglucosamine and 2,3-diacylglucosamine-1-phosphate to form lipid A disaccharide, a precursor of lipid A, a phosphorylated glycolipid that anchors the lipopolysaccharide to the outer membrane of the cell. In Geobacter sulfurreducens (strain ATCC 51573 / DSM 12127 / PCA), this protein is Lipid-A-disaccharide synthase.